Consider the following 231-residue polypeptide: Phosphoheptose isomerase (231 aa).

One can recognise an SIS domain in the interval 35-190 (LAAVLGGGGR…CAAFDAALER (156 aa)). 50 to 52 (NGG) contacts substrate. Zn(2+) is bound by residues H59 and E63. Substrate contacts are provided by residues E63, 92–93 (ND), 118–120 (STS), S123, and Q170. Zn(2+)-binding residues include Q170 and H178. 2 stretches are compositionally biased toward low complexity: residues 197-206 (AAGSAASTGR) and 214-225 (ASTGRAAGAGRA). A disordered region spans residues 197 to 231 (AAGSAASTGRAARRERAASTGRAAGAGRAAQRKRR).

It belongs to the SIS family. GmhA subfamily. Zn(2+) is required as a cofactor.

Its subcellular location is the cytoplasm. The enzyme catalyses 2 D-sedoheptulose 7-phosphate = D-glycero-alpha-D-manno-heptose 7-phosphate + D-glycero-beta-D-manno-heptose 7-phosphate. It functions in the pathway carbohydrate biosynthesis; D-glycero-D-manno-heptose 7-phosphate biosynthesis; D-glycero-alpha-D-manno-heptose 7-phosphate and D-glycero-beta-D-manno-heptose 7-phosphate from sedoheptulose 7-phosphate: step 1/1. In terms of biological role, catalyzes the isomerization of sedoheptulose 7-phosphate in D-glycero-D-manno-heptose 7-phosphate. This Streptomyces coelicolor (strain ATCC BAA-471 / A3(2) / M145) protein is Phosphoheptose isomerase.